Here is a 304-residue protein sequence, read N- to C-terminus: Protoheme IX farnesyltransferase (304 aa).

Helical transmembrane passes span 24–44 (VMTLVIFTGLCGLLAAPGTIH), 45–65 (PVIAFTAILCIAVGAGGAAAL), 107–127 (VFVMGLGVGWLAAVILAFSIF), 145–165 (IVIGGGAGAFPPMIGWVAVTG), 172–192 (VLLFLIIFMWTPPHFWALALF), 234–254 (WIGGAGAVYGWSALVLGLVFV), and 277–297 (LFGYSVLYLFVLFGMLVGDRL).

Belongs to the UbiA prenyltransferase family. Protoheme IX farnesyltransferase subfamily.

It localises to the cell inner membrane. The enzyme catalyses heme b + (2E,6E)-farnesyl diphosphate + H2O = Fe(II)-heme o + diphosphate. It functions in the pathway porphyrin-containing compound metabolism; heme O biosynthesis; heme O from protoheme: step 1/1. Converts heme B (protoheme IX) to heme O by substitution of the vinyl group on carbon 2 of heme B porphyrin ring with a hydroxyethyl farnesyl side group. This chain is Protoheme IX farnesyltransferase, found in Novosphingobium aromaticivorans (strain ATCC 700278 / DSM 12444 / CCUG 56034 / CIP 105152 / NBRC 16084 / F199).